The chain runs to 279 residues: Putative pyruvate, phosphate dikinase regulatory protein (279 aa).

156-163 provides a ligand contact to ADP; it reads GVSRTSKT.

It belongs to the pyruvate, phosphate/water dikinase regulatory protein family. PDRP subfamily.

The catalysed reaction is N(tele)-phospho-L-histidyl/L-threonyl-[pyruvate, phosphate dikinase] + ADP = N(tele)-phospho-L-histidyl/O-phospho-L-threonyl-[pyruvate, phosphate dikinase] + AMP + H(+). It carries out the reaction N(tele)-phospho-L-histidyl/O-phospho-L-threonyl-[pyruvate, phosphate dikinase] + phosphate + H(+) = N(tele)-phospho-L-histidyl/L-threonyl-[pyruvate, phosphate dikinase] + diphosphate. Functionally, bifunctional serine/threonine kinase and phosphorylase involved in the regulation of the pyruvate, phosphate dikinase (PPDK) by catalyzing its phosphorylation/dephosphorylation. This chain is Putative pyruvate, phosphate dikinase regulatory protein, found in Maricaulis maris (strain MCS10) (Caulobacter maris).